We begin with the raw amino-acid sequence, 245 residues long: Sec-independent protein translocase protein TatC (245 aa).

The next 6 membrane-spanning stretches (helical) occupy residues 17-37 (FISV…RSYI), 73-93 (FFAA…KFVA), 107-127 (FVSF…FVVV), 159-179 (VVVA…FAKI), 191-207 (FRIA…FMTP), and 210-230 (VLSQ…SILI).

This sequence belongs to the TatC family. The Tat system comprises two distinct complexes: a TatABC complex, containing multiple copies of TatA, TatB and TatC subunits, and a separate TatA complex, containing only TatA subunits. Substrates initially bind to the TatABC complex, which probably triggers association of the separate TatA complex to form the active translocon.

The protein resides in the cell inner membrane. Part of the twin-arginine translocation (Tat) system that transports large folded proteins containing a characteristic twin-arginine motif in their signal peptide across membranes. Together with TatB, TatC is part of a receptor directly interacting with Tat signal peptides. The sequence is that of Sec-independent protein translocase protein TatC from Campylobacter jejuni subsp. jejuni serotype O:2 (strain ATCC 700819 / NCTC 11168).